The primary structure comprises 171 residues: Putative phosphoesterase ABC1741 (171 aa).

The Proton donor role is filled by H34. Short sequence motifs (HXTX) lie at residues 34 to 37 (HITL) and 116 to 119 (HITI). H116 acts as the Proton acceptor in catalysis.

This sequence belongs to the 2H phosphoesterase superfamily. YjcG family.

This Shouchella clausii (strain KSM-K16) (Alkalihalobacillus clausii) protein is Putative phosphoesterase ABC1741.